Here is a 290-residue protein sequence, read N- to C-terminus: MFRFNPQLSHGCALALICCLLNLLMMHQPTNAELSPVVQGEFFLPILPDDHPPNTDTSFGGPISNLYDNLLQREYAGPVVFPNHQVERKAQRSPSLRLRFGRSDPDMLNNIVEKRWFGDVNQKPIRSPSLRLRFGRRDPTLPQMRRTAYDDLLERELTLNNQQQQQLGDTADDLSADYDGLYERVVRKPQRLRWGRSVPQFEATIGDNDQLYNSLWNSEKMRRMLLALQQYEAAPGHVAGYANDGDDTEAQLDEDTSEFQREARKPMRLRWGRSTGKAPQIETSSIAPKN.

Residues Met1–Ala32 form the signal peptide. A propeptide spanning residues Glu33–Glu87 is cleaved from the precursor. Phenylalanine amide occurs at positions 100 and 134. A propeptide spanning residues Asp138–Asn290 is cleaved from the precursor. Positions Val238–Asn290 are disordered. Over residues Asp244–Ser257 the composition is skewed to acidic residues. The span at Ile281 to Asn290 shows a compositional bias: polar residues.

The protein belongs to the NPY family.

It is found in the secreted. Functionally, plays a role in controlling food intake and regulating body size. The protein is Short neuropeptide F of Drosophila pseudoobscura pseudoobscura (Fruit fly).